The sequence spans 179 residues: Large ribosomal subunit protein uL5 (179 aa).

This sequence belongs to the universal ribosomal protein uL5 family. As to quaternary structure, part of the 50S ribosomal subunit; part of the 5S rRNA/L5/L18/L25 subcomplex. Contacts the 5S rRNA and the P site tRNA. Forms a bridge to the 30S subunit in the 70S ribosome.

Its function is as follows. This is one of the proteins that bind and probably mediate the attachment of the 5S RNA into the large ribosomal subunit, where it forms part of the central protuberance. In the 70S ribosome it contacts protein S13 of the 30S subunit (bridge B1b), connecting the 2 subunits; this bridge is implicated in subunit movement. Contacts the P site tRNA; the 5S rRNA and some of its associated proteins might help stabilize positioning of ribosome-bound tRNAs. The chain is Large ribosomal subunit protein uL5 from Enterococcus faecalis (strain ATCC 700802 / V583).